The following is a 487-amino-acid chain: Probable peptidoglycan glycosyltransferase FtsW (487 aa).

The next 9 membrane-spanning stretches (helical) occupy residues 30–50 (VSLI…VTSA), 71–91 (IYIV…MQWW), 93–113 (TSNA…LLVG), 122–142 (WLAI…FFFC), 167–187 (VVFF…TVVV), 203–223 (LWQF…LIMF), 282–302 (FIMA…VLAL), 332–352 (IGIW…GILP), and 358–378 (FPLL…VGLL). Disordered stretches follow at residues 398-419 (KAKA…SAGK) and 444-487 (IDSI…DGYV). Residues 401-416 (ASTSSSRKNKPKTASS) are compositionally biased toward polar residues. Residues 444 to 453 (IDSIMDDFAQ) are compositionally biased toward acidic residues.

It belongs to the SEDS family. FtsW subfamily.

Its subcellular location is the cell inner membrane. It catalyses the reaction [GlcNAc-(1-&gt;4)-Mur2Ac(oyl-L-Ala-gamma-D-Glu-L-Lys-D-Ala-D-Ala)](n)-di-trans,octa-cis-undecaprenyl diphosphate + beta-D-GlcNAc-(1-&gt;4)-Mur2Ac(oyl-L-Ala-gamma-D-Glu-L-Lys-D-Ala-D-Ala)-di-trans,octa-cis-undecaprenyl diphosphate = [GlcNAc-(1-&gt;4)-Mur2Ac(oyl-L-Ala-gamma-D-Glu-L-Lys-D-Ala-D-Ala)](n+1)-di-trans,octa-cis-undecaprenyl diphosphate + di-trans,octa-cis-undecaprenyl diphosphate + H(+). It functions in the pathway cell wall biogenesis; peptidoglycan biosynthesis. Functionally, peptidoglycan polymerase that is essential for cell division. The chain is Probable peptidoglycan glycosyltransferase FtsW from Pseudoalteromonas atlantica (strain T6c / ATCC BAA-1087).